Reading from the N-terminus, the 443-residue chain is Ribosomal protein uS12 methylthiotransferase RimO (443 aa).

Residues 8-118 (PKIGFVSLGC…VLSHIHHYVP (111 aa)) form the MTTase N-terminal domain. [4Fe-4S] cluster contacts are provided by Cys-17, Cys-53, Cys-82, Cys-150, Cys-154, and Cys-157. The Radical SAM core domain maps to 136-373 (LTPRHYAYLK…MQLQQQISTE (238 aa)). One can recognise a TRAM domain in the interval 376-442 (QEKIGKVLPV…EYDLWGTIVE (67 aa)).

This sequence belongs to the methylthiotransferase family. RimO subfamily. It depends on [4Fe-4S] cluster as a cofactor.

Its subcellular location is the cytoplasm. The enzyme catalyses L-aspartate(89)-[ribosomal protein uS12]-hydrogen + (sulfur carrier)-SH + AH2 + 2 S-adenosyl-L-methionine = 3-methylsulfanyl-L-aspartate(89)-[ribosomal protein uS12]-hydrogen + (sulfur carrier)-H + 5'-deoxyadenosine + L-methionine + A + S-adenosyl-L-homocysteine + 2 H(+). Its function is as follows. Catalyzes the methylthiolation of an aspartic acid residue of ribosomal protein uS12. In Proteus mirabilis (strain HI4320), this protein is Ribosomal protein uS12 methylthiotransferase RimO.